We begin with the raw amino-acid sequence, 686 residues long: DNA topoisomerase 1 (686 aa).

The Toprim domain maps to 1–141 (MILIIAEKPN…KRMKFSALTK (141 aa)). Mg(2+) contacts are provided by glutamate 7 and aspartate 107. Residues 156-574 (NFGMANAGIA…EAKERLTKIL (419 aa)) enclose the Topo IA-type catalytic domain. The segment at 196 to 201 (STGRVQ) is interaction with DNA. Tyrosine 317 acts as the O-(5'-phospho-DNA)-tyrosine intermediate in catalysis. The C4-type 1 zinc finger occupies 606–634 (CPKCGGDLIVKYNKKTGKRFVGCSNWPKC). A C4-type 2; atypical zinc finger spans residues 653 to 678 (CCNGAPVVIIREEDGREFEICLDINC).

It belongs to the type IA topoisomerase family. As to quaternary structure, monomer. Mg(2+) serves as cofactor.

The enzyme catalyses ATP-independent breakage of single-stranded DNA, followed by passage and rejoining.. Releases the supercoiling and torsional tension of DNA, which is introduced during the DNA replication and transcription, by transiently cleaving and rejoining one strand of the DNA duplex. Introduces a single-strand break via transesterification at a target site in duplex DNA. The scissile phosphodiester is attacked by the catalytic tyrosine of the enzyme, resulting in the formation of a DNA-(5'-phosphotyrosyl)-enzyme intermediate and the expulsion of a 3'-OH DNA strand. The free DNA strand then undergoes passage around the unbroken strand, thus removing DNA supercoils. Finally, in the religation step, the DNA 3'-OH attacks the covalent intermediate to expel the active-site tyrosine and restore the DNA phosphodiester backbone. This chain is DNA topoisomerase 1, found in Pyrococcus horikoshii (strain ATCC 700860 / DSM 12428 / JCM 9974 / NBRC 100139 / OT-3).